A 415-amino-acid polypeptide reads, in one-letter code: Peptide chain release factor subunit 1 (415 aa).

The protein belongs to the eukaryotic release factor 1 family. Heterodimer of two subunits, one of which binds GTP.

The protein resides in the cytoplasm. In terms of biological role, directs the termination of nascent peptide synthesis (translation) in response to the termination codons UAA, UAG and UGA. This chain is Peptide chain release factor subunit 1, found in Thermococcus sibiricus (strain DSM 12597 / MM 739).